The primary structure comprises 348 residues: Lipoyl synthase (348 aa).

[4Fe-4S] cluster contacts are provided by C55, C60, C66, C81, C85, C88, and S292. The region spanning 67-281 is the Radical SAM core domain; that stretch reads WESREATFLI…ADAAKEMGFA (215 aa).

It belongs to the radical SAM superfamily. Lipoyl synthase family. It depends on [4Fe-4S] cluster as a cofactor.

Its subcellular location is the cytoplasm. It catalyses the reaction [[Fe-S] cluster scaffold protein carrying a second [4Fe-4S](2+) cluster] + N(6)-octanoyl-L-lysyl-[protein] + 2 oxidized [2Fe-2S]-[ferredoxin] + 2 S-adenosyl-L-methionine + 4 H(+) = [[Fe-S] cluster scaffold protein] + N(6)-[(R)-dihydrolipoyl]-L-lysyl-[protein] + 4 Fe(3+) + 2 hydrogen sulfide + 2 5'-deoxyadenosine + 2 L-methionine + 2 reduced [2Fe-2S]-[ferredoxin]. It participates in protein modification; protein lipoylation via endogenous pathway; protein N(6)-(lipoyl)lysine from octanoyl-[acyl-carrier-protein]: step 2/2. Catalyzes the radical-mediated insertion of two sulfur atoms into the C-6 and C-8 positions of the octanoyl moiety bound to the lipoyl domains of lipoate-dependent enzymes, thereby converting the octanoylated domains into lipoylated derivatives. The protein is Lipoyl synthase of Corynebacterium glutamicum (strain R).